The following is a 316-amino-acid chain: Retron Ec73 reverse transcriptase (316 aa).

One can recognise a Reverse transcriptase domain in the interval 1–243; that stretch reads MRIYSLIDSQ…GSIVVTGLKV (243 aa). Mg(2+) contacts are provided by Asp-99, Asp-189, and Asp-190. The tract at residues 247-316 is necessary and required for recognition and binding of RNA; the sequence is FHITLHRSMK…WIQNLHNKVE (70 aa).

The protein belongs to the bacterial reverse transcriptase family.

It carries out the reaction DNA(n) + a 2'-deoxyribonucleoside 5'-triphosphate = DNA(n+1) + diphosphate. In terms of biological role, reverse transcriptase (RT) component of antiviral defense system retron Ec73, composed of a non-coding RNA (ncRNA) followed by a ribosyltransferase/DNA-binding protein then a reverse transcriptase (RT). Expression of this retron confers protection against bacteriophages SECphi4, SECphi6, SECphi27 and P1. At multiplicity of infection (MOI) of 0.02 cultures grow normally when infected with SECphi4 without collapsing, at MOI 2 cultures enter growth stasis. Responsible for synthesis of msDNA-Ec73 (a branched molecule with RNA linked by a 2',5'-phosphodiester bond to ssDNA). The retron transcript serves as primer (from a conserved internal G residue) and template for the reaction, and codes for the RT. Recognizes only its cognate RNA as a primer template. This Escherichia coli protein is Retron Ec73 reverse transcriptase.